Here is a 434-residue protein sequence, read N- to C-terminus: MSHLDDIPSTPGKFKMMDKSPFFLHRTRWQSSVAKLAFWSLVFFGLLFIFFYRSPISNPDSSRRSLRTYSWGGPAWEKRVRSSARVRTRNGVSVLVTGAAGFVGTHVSAALKRRGDGVLGLDNFNDYYDTSLKRSRQALLERSGVFIVEGDINDLSLLKKLFEVVPFTHVMHLAAQAGVRYAMENPGSYVHSNIAGFVNLLEVCKSANPQPAIVWASSSSVYGLNTKVPFSEKDRTDQPASLYAATKKAGEEIAHTYNHIYGLSLTGLRFFTVYGPWGRPDMAYFFFTRDILKGKAISIFEGANHGTVARDFTYIDDIVKGCLGALDTAEKSTGSGGKKRGAAQLRVFNLGNTSPVPVTDLVSILERLLKVKAKRNMMKLPRNGDVPFTHANISSAQREFGYKPSTDLQTGLKKFVRWYLGYYKQGGKKVAAAA.

The next 2 membrane-spanning stretches (helical) occupy residues 32–52 (SVAK…IFFY) and 91–111 (GVSV…SAAL). An NAD(+)-binding site is contributed by 93 to 124 (SVLVTGAAGFVGTHVSAALKRRGDGVLGLDNF). The active-site Proton acceptor is Tyr243.

The protein belongs to the NAD(P)-dependent epimerase/dehydratase family. Homodimer. As to expression, in roots, leaves, siliques, flowers, pollen and stems.

It localises to the golgi apparatus. The protein localises to the golgi stack membrane. It carries out the reaction UDP-alpha-D-glucuronate = UDP-alpha-D-galacturonate. Involved in the synthesis of the negatively charged monosaccharide that forms the backbone of pectic cell wall components. This is UDP-glucuronate 4-epimerase 2 (GAE2) from Arabidopsis thaliana (Mouse-ear cress).